Consider the following 222-residue polypeptide: Cytidylate kinase (222 aa).

Gly-9–Thr-17 serves as a coordination point for ATP.

This sequence belongs to the cytidylate kinase family. Type 1 subfamily.

It localises to the cytoplasm. The enzyme catalyses CMP + ATP = CDP + ADP. The catalysed reaction is dCMP + ATP = dCDP + ADP. The sequence is that of Cytidylate kinase from Thermosipho africanus (strain TCF52B).